Reading from the N-terminus, the 360-residue chain is UDP-N-acetylglucosamine--N-acetylmuramyl-(pentapeptide) pyrophosphoryl-undecaprenol N-acetylglucosamine transferase (360 aa).

UDP-N-acetyl-alpha-D-glucosamine contacts are provided by residues 12–14 (TGG), Asn-124, Arg-161, Ser-189, Ile-243, and Gln-288.

The protein belongs to the glycosyltransferase 28 family. MurG subfamily.

It localises to the cell inner membrane. It carries out the reaction di-trans,octa-cis-undecaprenyl diphospho-N-acetyl-alpha-D-muramoyl-L-alanyl-D-glutamyl-meso-2,6-diaminopimeloyl-D-alanyl-D-alanine + UDP-N-acetyl-alpha-D-glucosamine = di-trans,octa-cis-undecaprenyl diphospho-[N-acetyl-alpha-D-glucosaminyl-(1-&gt;4)]-N-acetyl-alpha-D-muramoyl-L-alanyl-D-glutamyl-meso-2,6-diaminopimeloyl-D-alanyl-D-alanine + UDP + H(+). It functions in the pathway cell wall biogenesis; peptidoglycan biosynthesis. In terms of biological role, cell wall formation. Catalyzes the transfer of a GlcNAc subunit on undecaprenyl-pyrophosphoryl-MurNAc-pentapeptide (lipid intermediate I) to form undecaprenyl-pyrophosphoryl-MurNAc-(pentapeptide)GlcNAc (lipid intermediate II). The sequence is that of UDP-N-acetylglucosamine--N-acetylmuramyl-(pentapeptide) pyrophosphoryl-undecaprenol N-acetylglucosamine transferase from Acidithiobacillus ferrooxidans (strain ATCC 23270 / DSM 14882 / CIP 104768 / NCIMB 8455) (Ferrobacillus ferrooxidans (strain ATCC 23270)).